The sequence spans 146 residues: Large ribosomal subunit protein uL15 (146 aa).

Positions 1–54 (MKLHELKPAAGSKKAPKRIGRGTGSGLGRNAGKGEKGQNARSGGGVRPGFEGGQ) are disordered. Composition is skewed to gly residues over residues 21–31 (RGTGSGLGRNA) and 42–52 (SGGGVRPGFEG).

The protein belongs to the universal ribosomal protein uL15 family. Part of the 50S ribosomal subunit.

In terms of biological role, binds to the 23S rRNA. The chain is Large ribosomal subunit protein uL15 from Clostridium beijerinckii (strain ATCC 51743 / NCIMB 8052) (Clostridium acetobutylicum).